A 418-amino-acid polypeptide reads, in one-letter code: Actin-related protein 3 (418 aa).

Position 2 is an N-acetylalanine (Ala-2).

This sequence belongs to the actin family. ARP3 subfamily. In terms of assembly, component of the Arp2/3 complex composed of ACTR2/ARP2, ACTR3/ARP3, ARPC1B/p41-ARC, ARPC2/p34-ARC, ARPC3/p21-ARC, ARPC4/p20-ARC and ARPC5/p16-ARC. As to expression, detected in fibroblasts.

The protein localises to the cytoplasm. It localises to the cytoskeleton. The protein resides in the cell projection. It is found in the nucleus. In terms of biological role, ATP-binding component of the Arp2/3 complex, a multiprotein complex that mediates actin polymerization upon stimulation by nucleation-promoting factor (NPF). The Arp2/3 complex mediates the formation of branched actin networks in the cytoplasm, providing the force for cell motility. Seems to contact the pointed end of the daughter actin filament. In addition to its role in the cytoplasmic cytoskeleton, the Arp2/3 complex also promotes actin polymerization in the nucleus, thereby regulating gene transcription and repair of damaged DNA. The Arp2/3 complex promotes homologous recombination (HR) repair in response to DNA damage by promoting nuclear actin polymerization, leading to drive motility of double-strand breaks (DSBs). The protein is Actin-related protein 3 (ACTR3) of Gallus gallus (Chicken).